Reading from the N-terminus, the 450-residue chain is Phosphoglucosamine mutase (450 aa).

Ser-101 acts as the Phosphoserine intermediate in catalysis. Positions 101, 241, 243, and 245 each coordinate Mg(2+). Ser-101 carries the post-translational modification Phosphoserine.

Belongs to the phosphohexose mutase family. Mg(2+) is required as a cofactor. Post-translationally, activated by phosphorylation.

The enzyme catalyses alpha-D-glucosamine 1-phosphate = D-glucosamine 6-phosphate. Its function is as follows. Catalyzes the conversion of glucosamine-6-phosphate to glucosamine-1-phosphate. The polypeptide is Phosphoglucosamine mutase (Listeria monocytogenes serovar 1/2a (strain ATCC BAA-679 / EGD-e)).